Consider the following 167-residue polypeptide: N-alpha-acetyltransferase (167 aa).

An N-acetyltransferase domain is found at 12-167 (YRIRNARLTD…EDAYLMAAPL (156 aa)). Residue Tyr-37 participates in substrate binding. His-88 lines the Zn(2+) pocket. Acetyl-CoA-binding positions include 92–94 (IAV) and 100–105 (RLGIGT). Glu-127 lines the Zn(2+) pocket. Acetyl-CoA-binding positions include Asn-132 and 139 to 141 (YKK). Tyr-154 is a binding site for substrate.

The protein belongs to the acetyltransferase family. ARD1 subfamily. Homodimer.

It is found in the cytoplasm. The enzyme catalyses N-terminal L-alanyl-[protein] + acetyl-CoA = N-terminal N(alpha)-acetyl-L-alanyl-[protein] + CoA + H(+). The catalysed reaction is N-terminal L-seryl-[protein] + acetyl-CoA = N-terminal N(alpha)-acetyl-L-seryl-[protein] + CoA + H(+). It catalyses the reaction N-terminal L-methionyl-L-leucyl-[protein] + acetyl-CoA = N-terminal N(alpha)-acetyl-L-methionyl-L-leucyl-[protein] + CoA + H(+). It carries out the reaction N-terminal L-methionyl-L-glutamyl-[protein] + acetyl-CoA = N-terminal N(alpha)-acetyl-L-methionyl-L-glutamyl-[protein] + CoA + H(+). Its function is as follows. Displays alpha (N-terminal) acetyltransferase activity. Catalyzes the covalent attachment of an acetyl moiety from acetyl-CoA to the free alpha-amino group at the N-terminus of a protein. In Sulfurisphaera tokodaii (strain DSM 16993 / JCM 10545 / NBRC 100140 / 7) (Sulfolobus tokodaii), this protein is N-alpha-acetyltransferase.